The following is a 248-amino-acid chain: Transcriptional activator protein FnrL (248 aa).

In terms of domain architecture, HTH crp-type spans 154–232; the sequence is KTAREKIASL…KRHVIVTDFA (79 aa). Positions 191-210 form a DNA-binding region, H-T-H motif; it reads REEMADYLGLTLETVSRQVS.

Functionally, anaerobic regulatory protein; transcriptional activator of hemA. Appears to regulate other genes. The chain is Transcriptional activator protein FnrL (fnrL) from Cereibacter sphaeroides (strain ATCC 17023 / DSM 158 / JCM 6121 / CCUG 31486 / LMG 2827 / NBRC 12203 / NCIMB 8253 / ATH 2.4.1.) (Rhodobacter sphaeroides).